Reading from the N-terminus, the 415-residue chain is [Pyruvate dehydrogenase (acetyl-transferring)] kinase isozyme 3, mitochondrial (415 aa).

The Histidine kinase domain occupies 131-362 (IEYKEKFGFD…DAVIYLKALS (232 aa)). ATP is bound at residue 247 to 254 (ELFKNSMR). Residue Lys278 is modified to N6-succinyllysine. Residues Asp287, 306–307 (ST), and 323–328 (GFGYGL) each bind ATP. Residues 383–415 (TPEADDWSNPSSEPRDASKYKAKQDKIKSNRTF) are disordered. The segment covering 395 to 415 (EPRDASKYKAKQDKIKSNRTF) has biased composition (basic and acidic residues).

It belongs to the PDK/BCKDK protein kinase family. As to quaternary structure, homodimer. Interacts with the pyruvate dehydrogenase complex subunit DLAT, and is part of the multimeric pyruvate dehydrogenase complex that contains multiple copies of pyruvate dehydrogenase (E1), dihydrolipoamide acetyltransferase (DLAT, E2) and lipoamide dehydrogenase (DLD, E3).

It localises to the mitochondrion matrix. The catalysed reaction is L-seryl-[pyruvate dehydrogenase E1 alpha subunit] + ATP = O-phospho-L-seryl-[pyruvate dehydrogenase E1 alpha subunit] + ADP + H(+). Functionally, inhibits pyruvate dehydrogenase activity by phosphorylation of the E1 subunit PDHA1, and thereby regulates glucose metabolism and aerobic respiration. Can also phosphorylate PDHA2. Decreases glucose utilization and increases fat metabolism in response to prolonged fasting, and as adaptation to a high-fat diet. Plays a role in glucose homeostasis and in maintaining normal blood glucose levels in function of nutrient levels and under starvation. Plays a role in the generation of reactive oxygen species. This chain is [Pyruvate dehydrogenase (acetyl-transferring)] kinase isozyme 3, mitochondrial (Pdk3), found in Mus musculus (Mouse).